The chain runs to 112 residues: Protein Churchill (112 aa).

Residues Cys2, Cys5, Cys30, Cys33, His59, Cys61, Cys64, His66, His71, Cys88, and Cys91 each contribute to the Zn(2+) site.

Belongs to the Churchill family.

Its function is as follows. Transcriptional activator that mediates FGF signaling during neural development. Plays a role in the regulation of cell movement. Does not bind DNA by itself. The sequence is that of Protein Churchill (CHURC1) from Bos taurus (Bovine).